A 310-amino-acid polypeptide reads, in one-letter code: Homoserine kinase (310 aa).

ATP is bound at residue 91–101; the sequence is PIGSGLGSSAC.

It belongs to the GHMP kinase family. Homoserine kinase subfamily.

The protein resides in the cytoplasm. It carries out the reaction L-homoserine + ATP = O-phospho-L-homoserine + ADP + H(+). Its pathway is amino-acid biosynthesis; L-threonine biosynthesis; L-threonine from L-aspartate: step 4/5. Catalyzes the ATP-dependent phosphorylation of L-homoserine to L-homoserine phosphate. This is Homoserine kinase from Shigella flexneri serotype 5b (strain 8401).